Consider the following 314-residue polypeptide: tRNA dimethylallyltransferase (314 aa).

The segment at 1 to 25 (MAEEPQRSPAPTSPFAFTVPSNSLS) is disordered. Position 40–47 (40–47 (GPTASGKS)) interacts with ATP. 42 to 47 (TASGKS) serves as a coordination point for substrate.

The protein belongs to the IPP transferase family. Monomer. Mg(2+) is required as a cofactor.

It catalyses the reaction adenosine(37) in tRNA + dimethylallyl diphosphate = N(6)-dimethylallyladenosine(37) in tRNA + diphosphate. Catalyzes the transfer of a dimethylallyl group onto the adenine at position 37 in tRNAs that read codons beginning with uridine, leading to the formation of N6-(dimethylallyl)adenosine (i(6)A). In Cereibacter sphaeroides (strain ATCC 17023 / DSM 158 / JCM 6121 / CCUG 31486 / LMG 2827 / NBRC 12203 / NCIMB 8253 / ATH 2.4.1.) (Rhodobacter sphaeroides), this protein is tRNA dimethylallyltransferase.